The chain runs to 415 residues: Serine hydroxymethyltransferase (415 aa).

Residues L117 and 121-123 (GHL) each bind (6S)-5,6,7,8-tetrahydrofolate. K226 carries the post-translational modification N6-(pyridoxal phosphate)lysine. Residue E241 coordinates (6S)-5,6,7,8-tetrahydrofolate.

Belongs to the SHMT family. Homodimer. Pyridoxal 5'-phosphate serves as cofactor.

Its subcellular location is the cytoplasm. The enzyme catalyses (6R)-5,10-methylene-5,6,7,8-tetrahydrofolate + glycine + H2O = (6S)-5,6,7,8-tetrahydrofolate + L-serine. It functions in the pathway one-carbon metabolism; tetrahydrofolate interconversion. Its pathway is amino-acid biosynthesis; glycine biosynthesis; glycine from L-serine: step 1/1. Catalyzes the reversible interconversion of serine and glycine with tetrahydrofolate (THF) serving as the one-carbon carrier. This reaction serves as the major source of one-carbon groups required for the biosynthesis of purines, thymidylate, methionine, and other important biomolecules. Also exhibits THF-independent aldolase activity toward beta-hydroxyamino acids, producing glycine and aldehydes, via a retro-aldol mechanism. The polypeptide is Serine hydroxymethyltransferase (Bacillus velezensis (strain DSM 23117 / BGSC 10A6 / LMG 26770 / FZB42) (Bacillus amyloliquefaciens subsp. plantarum)).